The sequence spans 740 residues: NAD(P)H-quinone oxidoreductase subunit 5, chloroplastic (740 aa).

17 helical membrane-spanning segments follow: residues 9–29 (WIIP…LLVV), 40–60 (WAFI…NISI), 89–109 (IDSL…MVLI), 125–145 (FAYL…SNLI), 147–167 (IYIF…FWFT), 185–205 (GDFG…SFEF), 219–239 (NTIN…GAIA), 258–278 (TPIS…FLVA), 290–310 (IMYF…TLAL), 327–347 (LGYI…FHLI), 354–374 (ALLF…VGYS), 396–416 (TTFL…CFWS), 425–445 (WLYS…TAFY), 521–538 (MFSF…PYPH), 545–565 (LLSV…GIPL), 599–619 (FVIN…IASF), and 720–740 (YLFV…YFVL).

The protein belongs to the complex I subunit 5 family. NDH is composed of at least 16 different subunits, 5 of which are encoded in the nucleus.

The protein resides in the plastid. It is found in the chloroplast thylakoid membrane. The enzyme catalyses a plastoquinone + NADH + (n+1) H(+)(in) = a plastoquinol + NAD(+) + n H(+)(out). It catalyses the reaction a plastoquinone + NADPH + (n+1) H(+)(in) = a plastoquinol + NADP(+) + n H(+)(out). Its function is as follows. NDH shuttles electrons from NAD(P)H:plastoquinone, via FMN and iron-sulfur (Fe-S) centers, to quinones in the photosynthetic chain and possibly in a chloroplast respiratory chain. The immediate electron acceptor for the enzyme in this species is believed to be plastoquinone. Couples the redox reaction to proton translocation, and thus conserves the redox energy in a proton gradient. The polypeptide is NAD(P)H-quinone oxidoreductase subunit 5, chloroplastic (ndhF) (Piper cenocladum (Ant piper)).